Reading from the N-terminus, the 211-residue chain is Urease accessory protein UreG (211 aa).

A GTP-binding site is contributed by 8–15 (GPVGSGKT).

The protein belongs to the SIMIBI class G3E GTPase family. UreG subfamily. In terms of assembly, homodimer. UreD, UreF and UreG form a complex that acts as a GTP-hydrolysis-dependent molecular chaperone, activating the urease apoprotein by helping to assemble the nickel containing metallocenter of UreC. The UreE protein probably delivers the nickel.

It is found in the cytoplasm. Facilitates the functional incorporation of the urease nickel metallocenter. This process requires GTP hydrolysis, probably effectuated by UreG. In Metallosphaera sedula (strain ATCC 51363 / DSM 5348 / JCM 9185 / NBRC 15509 / TH2), this protein is Urease accessory protein UreG.